We begin with the raw amino-acid sequence, 478 residues long: Aspartate ammonia-lyase (478 aa).

L-aspartate contacts are provided by T109, S148, T149, N150, and T195. Residues 326–335 (GSSIMPGKVN) form an SS loop region. The active-site Proton acceptor is S327. L-aspartate contacts are provided by S328 and K333.

This sequence belongs to the class-II fumarase/aspartase family. Aspartase subfamily. As to quaternary structure, homotetramer.

It carries out the reaction L-aspartate = fumarate + NH4(+). Functionally, catalyzes the reversible conversion of L-aspartate to fumarate and ammonia. The protein is Aspartate ammonia-lyase of Pseudomonas fluorescens.